Reading from the N-terminus, the 122-residue chain is Putative protein adenylyltransferase MJ1547 (122 aa).

The GSX(10)DXD motif signature appears at 11 to 25 (GSYAKNEYTKRSDID). Residues Asp-23, Asp-25, and Asp-48 each coordinate Mg(2+).

The protein belongs to the MntA antitoxin family. Probably forms a complex with cognate toxin MJ1548. The cofactor is Mg(2+).

It carries out the reaction L-tyrosyl-[protein] + ATP = O-(5'-adenylyl)-L-tyrosyl-[protein] + diphosphate. It catalyses the reaction O-(5'-adenylyl)-L-tyrosyl-[protein] + ATP = O-[5'-(adenylyl-(5'-&gt;3')-adenylyl)]-L-tyrosyl-[protein] + diphosphate. Functionally, probable antitoxin component of a putative type VII toxin-antitoxin (TA) system. Neutralizes cognate toxic MJ1548 by di-AMPylation. The protein is Putative protein adenylyltransferase MJ1547 of Methanocaldococcus jannaschii (strain ATCC 43067 / DSM 2661 / JAL-1 / JCM 10045 / NBRC 100440) (Methanococcus jannaschii).